The following is a 499-amino-acid chain: Probable malate:quinone oxidoreductase (499 aa).

Belongs to the MQO family. FAD serves as cofactor.

The catalysed reaction is (S)-malate + a quinone = a quinol + oxaloacetate. It functions in the pathway carbohydrate metabolism; tricarboxylic acid cycle; oxaloacetate from (S)-malate (quinone route): step 1/1. This Exiguobacterium sp. (strain ATCC BAA-1283 / AT1b) protein is Probable malate:quinone oxidoreductase.